The sequence spans 44 residues: Mu-conotoxin-like Cal 12.1.2f (44 aa).

Cystine bridges form between cysteine 3-cysteine 15, cysteine 10-cysteine 27, cysteine 17-cysteine 32, and cysteine 26-cysteine 38. Tryptophan 16 is subject to 6'-bromotryptophan. A 4-hydroxyproline modification is found at proline 22. Residues tryptophan 36 and tryptophan 37 each carry the 6'-bromotryptophan modification. Proline 39 is subject to 4-hydroxyproline. Tryptophan 43 carries the 6'-bromotryptophan modification.

Expressed by the venom duct.

The protein localises to the secreted. In terms of biological role, mu-conotoxins block voltage-gated sodium channels. This toxin reversibly blocks voltage-gated sodium channel in cephalopods, with no alteration in the voltage dependence of sodium conductance or on the kinetics of inactivation. This Californiconus californicus (California cone) protein is Mu-conotoxin-like Cal 12.1.2f.